We begin with the raw amino-acid sequence, 81 residues long: Conotoxin ArMKLT2-01 (81 aa).

The N-terminal stretch at 1-19 (MKLTCVIIVVALFLTACHA) is a signal peptide. Positions 20–43 (KDKQEHPAVRGSDDMQDSEDLKLA) are excised as a propeptide. 3 disulfides stabilise this stretch: Cys46-Cys61, Cys53-Cys65, and Cys60-Cys74.

It belongs to the conotoxin O1 superfamily. As to expression, expressed by the venom duct.

It localises to the secreted. The polypeptide is Conotoxin ArMKLT2-01 (Conus arenatus (Sand-dusted cone)).